The sequence spans 201 residues: UPF0301 protein BP0319 (201 aa).

This sequence belongs to the UPF0301 (AlgH) family.

The chain is UPF0301 protein BP0319 from Bordetella pertussis (strain Tohama I / ATCC BAA-589 / NCTC 13251).